Reading from the N-terminus, the 142-residue chain is uncharacterized protein (142 aa).

An N-acetyltransferase domain is found at 1–120 (MADKFDANDE…TILKWEKNMD (120 aa)).

The protein belongs to the acetyltransferase family.

This is an uncharacterized protein from Streptococcus pyogenes serotype M1.